Reading from the N-terminus, the 295-residue chain is Succinate dehydrogenase assembly factor 2, mitochondrial (295 aa).

Disordered regions lie at residues 35–90 (AKDN…PELL), 208–227 (PEEG…RTGA), and 269–295 (TGFH…VFDS). Residues 45–75 (STPSTAPEYRQNQTSKPPNQFMPNSTSTMTN) are compositionally biased toward polar residues.

This sequence belongs to the SDHAF2 family. As to quaternary structure, interacts with the flavoprotein subunit within the SDH catalytic dimer.

The protein localises to the mitochondrion matrix. Functionally, plays an essential role in the assembly of succinate dehydrogenase (SDH), an enzyme complex (also referred to as respiratory complex II) that is a component of both the tricarboxylic acid (TCA) cycle and the mitochondrial electron transport chain, and which couples the oxidation of succinate to fumarate with the reduction of ubiquinone (coenzyme Q) to ubiquinol. Required for flavinylation (covalent attachment of FAD) of the flavoprotein subunit of the SDH catalytic dimer. This is Succinate dehydrogenase assembly factor 2, mitochondrial from Aspergillus terreus (strain NIH 2624 / FGSC A1156).